Here is an 864-residue protein sequence, read N- to C-terminus: Mitochondrial 15S rRNA processing factor CCM1 (864 aa).

A mitochondrion-targeting transit peptide spans 1 to 76 (MYMARCGPKN…REFSNTLKER (76 aa)). PPR repeat units lie at residues 319–353 (NKQNLTTVIQFYSRKEMTKQAWNTFDTMKFLSTKH) and 356–390 (DICTYNTMLRICEKERNFPKALDLFQEIQDHNIKP).

The protein belongs to the CCM1 family. Binds to mitochondrial small subunit 15S rRNA.

The protein localises to the mitochondrion. Its function is as follows. Regulates mitochondrial small subunit maturation by controlling 15S rRNA 5'-end processing. Localizes to the 5' precursor of the 15S rRNA in a position that is subsequently occupied by mS47 in the mature yeast mtSSU. Uses structure and sequence-specific RNA recognition, binding to a single-stranded region of the precursor and specifically recognizing bases -6 to -1. The exchange of Ccm1 for mS47 is coupled to the irreversible removal of precursor rRNA that is accompanied by conformational changes of the mitoribosomal proteins uS5m and mS26. These conformational changes signal completion of 5'-end rRNA processing through protection of the mature 5'-end of the 15S rRNA and stabilization of mS47. The removal of the 5' precursor together with the dissociation of Ccm1 may be catalyzed by the 5'-3' exoribonuclease Pet127. Involved in the specific removal of group I introns in mitochondrial encoded transcripts. In Saccharomyces cerevisiae (strain Lalvin EC1118 / Prise de mousse) (Baker's yeast), this protein is Mitochondrial 15S rRNA processing factor CCM1 (CCM1).